A 447-amino-acid chain; its full sequence is MLLDAGPQYPAIGVTTFGASRHHSAGDVAERDVGLGINPFADGMGAFKLNPSSHELASAGQTAFTSQAPGYAAAAALGHHHHPGHVGSYSSAAFNSTRDFLFRNRGFGDAAAAASAQHSLFAASAGGFGGPHGHTDAAGHLLFPGLHEQAAGHASPNVVNGQMRLGFSGDMYPRPEQYGQVTSPRSEHYAAPQLHGYGPMNVNMAAHHGAGAFFRYMRQPIKQELICKWIEPEQLANPKKSCNKTFSTMHELVTHVTVEHVGGPEQSNHICFWEECPREGKPFKAKYKLVNHIRVHTGEKPFPCPFPGCGKVFARSENLKIHKRTHTGEKPFKCEFEGCDRRFANSSDRKKHMHVHTSDKPYLCKMCDKSYTHPSSLRKHMKVHESSSQGSQPSPAASSGYESSTPPTIVSPSTDNPTTSSLSPSSSAVHHTAGHSALSSNFNEWYV.

Residues 225-260 (LICKWIEPEQLANPKKSCNKTFSTMHELVTHVTVEH) form a C2H2-type 1; atypical zinc finger. The C2H2-type 2; atypical zinc finger occupies 269 to 296 (HICFWEECPREGKPFKAKYKLVNHIRVH). 3 C2H2-type zinc fingers span residues 302–326 (FPCP…KRTH), 332–356 (FKCE…MHVH), and 362–384 (YLCK…MKVH). The interval 375–431 (SSLRKHMKVHESSSQGSQPSPAASSGYESSTPPTIVSPSTDNPTTSSLSPSSSAVHH) is disordered. Residues 386–427 (SSSQGSQPSPAASSGYESSTPPTIVSPSTDNPTTSSLSPSSS) are compositionally biased toward low complexity.

This sequence belongs to the GLI C2H2-type zinc-finger protein family. In terms of assembly, interacts (via the C2H2-type domains 3, 4 and 5) with MDFIC (via the C2H2-type domains 3, 4 and 5). Interacts with GLI1; the interaction enhances transcription activation. Interacts with GLI2. Interacts with GLI3; the interaction enhances transcription activation. As to expression, CNS. A high level expression is seen in the cerebellum. Detected in the nuclei of the cerebellar granule cell lineage from the progenitor cells of the external germinal layer to the postmigrated cells of the internal granular layer. Detected in medulloblastoma (26/29 cases), but not present in all other tumors examined.

It is found in the nucleus. It localises to the cytoplasm. Acts as a transcriptional activator. Involved in neurogenesis. Plays important roles in the early stage of organogenesis of the CNS, as well as during dorsal spinal cord development and maturation of the cerebellum. Involved in the spatial distribution of mossy fiber (MF) neurons within the pontine gray nucleus (PGN). Plays a role in the regulation of MF axon pathway choice. Promotes MF migration towards ipsilaterally-located cerebellar territories. May have a role in shear flow mechanotransduction in osteocytes. Retains nuclear GLI1 and GLI3 in the cytoplasm. Binds to the minimal GLI-consensus sequence 5'-TGGGTGGTC-3'. The sequence is that of Zinc finger protein ZIC 1 (ZIC1) from Homo sapiens (Human).